Consider the following 90-residue polypeptide: uncharacterized protein (90 aa).

A disordered region spans residues Trp53 to Val90. Residues Asp63–Cys74 are compositionally biased toward low complexity.

This is an uncharacterized protein from Orgyia pseudotsugata (Douglas-fir tussock moth).